A 687-amino-acid chain; its full sequence is Fork-head transcriptional regulator 2 (687 aa).

The interval 1 to 23 (MSAQFITPKKRPHSPLDSNELLP) is disordered. Residues 82–146 (VSIGRNIELS…NGARIDGQKV (65 aa)) form the FHA domain. A compositionally biased stretch (polar residues) spans 226–241 (SPSSISANSLQSNLDQ). Residues 226-246 (SPSSISANSLQSNLDQDLSKE) are disordered. A DNA-binding region (fork-head) is located at residues 252-350 (KPPYSYATMI…SDGTISKTRR (99 aa)). Disordered stretches follow at residues 385–449 (AASI…RYTP), 472–569 (QLGR…IGLN), and 584–687 (PERG…MIDS). A compositionally biased stretch (low complexity) spans 389 to 410 (PQQQKQQQQQQKRPPQQQNSQP). Over residues 411 to 442 (HLSQPHYTIPSNPMQTNSMGYIPQSNIYNMSN) the composition is skewed to polar residues. Positions 472–490 (QLGRPQGQLGQPMMQPQQQ) are enriched in low complexity. The span at 491–540 (SYTSSNIKTEPSSPKRNPSISNNTPKMAKGTVSTESHSRSTSYTTTQLHE) shows a compositional bias: polar residues. Composition is skewed to low complexity over residues 542-563 (SNFN…TTTN) and 589-624 (KGNP…PNTN). A compositionally biased stretch (polar residues) spans 625–659 (QSSPAFWNFVQFSTPNGQSPVRKSSEEVGNNSPTL). Residues 663 to 670 (IKREREND) carry the Nuclear localization signal motif.

It is found in the nucleus. Functionally, transcription factor required for the morphogenesis of true hyphal as well as yeast cells. Contributes to virulence. The sequence is that of Fork-head transcriptional regulator 2 (FKH2) from Candida albicans (strain SC5314 / ATCC MYA-2876) (Yeast).